Here is a 106-residue protein sequence, read N- to C-terminus: SDO1-like protein C21C3.19 (106 aa).

Belongs to the SDO1-like family.

It localises to the cytoplasm. The protein resides in the nucleus. May play a role in RNA metabolism. The polypeptide is SDO1-like protein C21C3.19 (Schizosaccharomyces pombe (strain 972 / ATCC 24843) (Fission yeast)).